The sequence spans 1341 residues: Aldehyde oxidase 4 (1341 aa).

The 2Fe-2S ferredoxin-type domain occupies 8–95 (DELIFFVNGK…GAAVTTVEGV (88 aa)). [2Fe-2S] cluster-binding residues include Cys47, Cys52, Cys55, and Cys77. Residue Gln116 participates in Mo-molybdopterin binding. Positions 117, 120, 152, and 154 each coordinate [2Fe-2S] cluster. Cys154 contacts Mo-molybdopterin. The FAD-binding PCMH-type domain occupies 239–424 (FQGERTTWLA…LSVFIPYSSQ (186 aa)). FAD contacts are provided by residues 267–274 (LIMGNTTV), Ala348, Thr357, His361, Asp370, and Val414. Mo-molybdopterin-binding positions include Ala805, 805–806 (AF), Leu1046, 1087–1090 (GSMG), Gln1202, and Leu1266. Glu1268 (proton acceptor; for azaheterocycle hydroxylase activity) is an active-site residue.

This sequence belongs to the xanthine dehydrogenase family. In terms of assembly, homodimer. [2Fe-2S] cluster is required as a cofactor. FAD serves as cofactor. The cofactor is Mo-molybdopterin. As to expression, detected in liver, testis, kidney, brain, Harderian gland and olfactory mucosa.

It localises to the cytoplasm. The enzyme catalyses an aldehyde + O2 + H2O = a carboxylate + H2O2 + H(+). The catalysed reaction is retinal + O2 + H2O = retinoate + H2O2 + H(+). Functionally, aldehyde oxidase able to catalyze the oxidation of retinaldehyde into retinoate. Acts as a negative modulator of the epidermal trophism. May be able to oxidize a wide variety of aldehydes into their corresponding carboxylates and to hydroxylate azaheterocycles. This is Aldehyde oxidase 4 (AOX4) from Cavia porcellus (Guinea pig).